We begin with the raw amino-acid sequence, 177 residues long: Large ribosomal subunit protein uL6 (177 aa).

The protein belongs to the universal ribosomal protein uL6 family. As to quaternary structure, part of the 50S ribosomal subunit.

Its function is as follows. This protein binds to the 23S rRNA, and is important in its secondary structure. It is located near the subunit interface in the base of the L7/L12 stalk, and near the tRNA binding site of the peptidyltransferase center. This chain is Large ribosomal subunit protein uL6, found in Ruegeria pomeroyi (strain ATCC 700808 / DSM 15171 / DSS-3) (Silicibacter pomeroyi).